We begin with the raw amino-acid sequence, 438 residues long: Phosphatidylcholine-sterol acyltransferase (438 aa).

The signal sequence occupies residues 1 to 24 (MGLPGSPWQRVLLLLGLLLPPATP). Asn44 carries an N-linked (GlcNAc...) asparagine glycan. The cysteines at positions 74 and 98 are disulfide-linked. The N-linked (GlcNAc...) asparagine glycan is linked to Asn108. Residue Ser205 is the Nucleophile of the active site. An N-linked (GlcNAc...) asparagine glycan is attached at Asn296. Cys337 and Cys380 form a disulfide bridge. Residue Asp369 is the Charge relay system of the active site. N-linked (GlcNAc...) asparagine glycosylation is present at Asn397. The active-site Charge relay system is the His401. Asn408 carries an N-linked (GlcNAc...) asparagine glycan.

This sequence belongs to the AB hydrolase superfamily. Lipase family. In terms of tissue distribution, detected in blood plasma. Produced and secreted by astrocytes (at protein level). Abundantly expressed in liver, brain and testis with highest levels in liver. In the brain, found in cerebellum, cerebral cortex, hippocampus and brain stem. Located to neurons and neuroglia.

The protein localises to the secreted. The enzyme catalyses a sterol + a 1,2-diacyl-sn-glycero-3-phosphocholine = a sterol ester + a 1-acyl-sn-glycero-3-phosphocholine. It catalyses the reaction a 1-O-alkyl-2-acetyl-sn-glycero-3-phosphocholine + H2O = a 1-O-alkyl-sn-glycero-3-phosphocholine + acetate + H(+). The catalysed reaction is a 1-hexadecanoyl-2-acyl-sn-glycero-3-phosphocholine + (24S)-hydroxycholesterol = (24S)-24-hydroxycholesterol ester + 1-hexadecanoyl-sn-glycero-3-phosphocholine. It carries out the reaction (24S)-hydroxycholesterol + 1-hexadecanoyl-2-(9Z,12Z-octadecadienoyl)-sn-glycero-3-phosphocholine = (24S)-hydroxycholesterol 3-linoleoate + 1-hexadecanoyl-sn-glycero-3-phosphocholine. The enzyme catalyses 1-hexadecanoyl-2-(5Z,8Z,11Z,14Z-eicosatetraenoyl)-sn-glycero-3-phosphocholine + cholesterol = cholesteryl (5Z,8Z,11Z,14Z)-eicosatetraenoate + 1-hexadecanoyl-sn-glycero-3-phosphocholine. It catalyses the reaction 1-hexadecanoyl-2-(9Z-octadecenoyl)-sn-glycero-3-phosphocholine + cholesterol = cholesteryl (9Z-octadecenoate) + 1-hexadecanoyl-sn-glycero-3-phosphocholine. The catalysed reaction is 1-hexadecanoyl-2-(8Z,11Z,14Z-eicosatrienoyl)-sn-glycero-3-phosphocholine + cholesterol = cholesteryl (8Z,11Z,14Z)-eicosatrienoate + 1-hexadecanoyl-sn-glycero-3-phosphocholine. It carries out the reaction 1-hexadecanoyl-2-(5Z,8Z,11Z-eicosatrienoyl)-sn-glycero-3-phosphocholine + cholesterol = cholesteryl (5Z,8Z,11Z)-eicosatrienoate + 1-hexadecanoyl-sn-glycero-3-phosphocholine. The enzyme catalyses 1-hexadecanoyl-2-(5Z,8Z,11Z,14Z,17Z-eicosapentaenoyl)-sn-glycero-3-phosphocholine + cholesterol = (5Z,8Z,11Z,14Z,17Z-eicosapentaenoyl)-cholesterol + 1-hexadecanoyl-sn-glycero-3-phosphocholine. It catalyses the reaction 1-hexadecanoyl-2-(9Z,12Z-octadecadienoyl)-sn-glycero-3-phosphocholine + cholesterol = cholesteryl (9Z,12Z)-octadecadienoate + 1-hexadecanoyl-sn-glycero-3-phosphocholine. The catalysed reaction is 1-hexadecanoyl-2-(6Z,9Z,12Z-octadecatrienoyl)-sn-glycero-3-phosphocholine + cholesterol = (6Z,9Z,12Z-octadecatrienoyl)-cholesterol + 1-hexadecanoyl-sn-glycero-3-phosphocholine. It carries out the reaction 1-hexadecanoyl-2-(11Z,14Z,17Z-eicosatrienoyl)-sn-glycero-3-phosphocholine + cholesterol = (11Z,14Z,17Z-eicosatrienoyl)-cholesterol + 1-hexadecanoyl-sn-glycero-3-phosphocholine. The enzyme catalyses 1-hexadecanoyl-2-(9Z,12Z,15Z-octadecatrienoyl)-sn-glycero-3-phosphocholine + cholesterol = (9Z,12Z,15Z-octadecatrienoyl)-cholesterol + 1-hexadecanoyl-sn-glycero-3-phosphocholine. It catalyses the reaction 1-hexadecanoyl-2-(9Z,12Z-octadecadienoyl)-sn-glycero-3-phosphocholine + H2O = (9Z,12Z)-octadecadienoate + 1-hexadecanoyl-sn-glycero-3-phosphocholine + H(+). The catalysed reaction is 1-hexadecanoyl-2-(5Z,8Z,11Z,14Z-eicosatetraenoyl)-sn-glycero-3-phosphocholine + H2O = 1-hexadecanoyl-sn-glycero-3-phosphocholine + (5Z,8Z,11Z,14Z)-eicosatetraenoate + H(+). It carries out the reaction a 1-O-alkyl-2-acetyl-sn-glycero-3-phosphocholine + 1-hexadecanoyl-sn-glycero-3-phosphocholine = 1-hexadecanoyl-2-acetyl-sn-glycero-3-phosphocholine + a 1-O-alkyl-sn-glycero-3-phosphocholine. APOA1 is the most potent activator in plasma. Also activated by APOE, APOC1 and APOA4. In terms of biological role, central enzyme in the extracellular metabolism of plasma lipoproteins. Synthesized mainly in the liver and secreted into plasma where it converts cholesterol and phosphatidylcholines (lecithins) to cholesteryl esters and lysophosphatidylcholines on the surface of high and low density lipoproteins (HDLs and LDLs). The cholesterol ester is then transported back to the liver. Also produced in the brain by primary astrocytes, and esterifies free cholesterol on nascent APOE-containing lipoproteins secreted from glia and influences cerebral spinal fluid (CSF) APOE- and APOA1 levels. Together with APOE and the cholesterol transporter ABCA1, plays a key role in the maturation of glial-derived, nascent lipoproteins. Required for remodeling high-density lipoprotein particles into their spherical forms. Has a preference for plasma 16:0-18:2 or 18:O-18:2 phosphatidylcholines. Catalyzes the hydrolysis of 1-O-alkyl-2-acetyl-sn-glycero-3-phosphocholine (platelet-activating factor or PAF) to 1-O-alkyl-sn-glycero-3-phosphocholine (lyso-PAF). Also catalyzes the transfer of the acetate group from PAF to 1-hexadecanoyl-sn-glycero-3-phosphocholine forming lyso-PAF. Catalyzes the esterification of (24S)-hydroxycholesterol (24(S)OH-C), also known as cerebrosterol to produce 24(S)OH-C monoesters. The sequence is that of Phosphatidylcholine-sterol acyltransferase (Lcat) from Mus musculus (Mouse).